The sequence spans 564 residues: Ribonuclease J (564 aa).

Zn(2+) contacts are provided by His-85, His-87, Asp-89, His-90, His-153, and Asp-175. Residue 375-379 participates in substrate binding; the sequence is HVSGH. A Zn(2+)-binding site is contributed by His-401.

This sequence belongs to the metallo-beta-lactamase superfamily. RNA-metabolizing metallo-beta-lactamase-like family. Bacterial RNase J subfamily. In terms of assembly, homodimer, may be a subunit of the RNA degradosome. The cofactor is Zn(2+).

It is found in the cytoplasm. In terms of biological role, an RNase that has 5'-3' exonuclease and possibly endonuclease activity. Plays a role in 16S and 23S rRNA processing. Might have a role in mRNA maturation and/or decay. This Sinorhizobium meliloti (strain Sm2011 / Rm2011 / 2011) protein is Ribonuclease J.